A 233-amino-acid chain; its full sequence is Forkhead box protein L3 (233 aa).

Positions R32–R130 form a DNA-binding region, fork-head. Over residues Y125 to P134 the composition is skewed to basic residues. The segment at Y125–Y198 is disordered. Residues R175 to P184 are compositionally biased toward pro residues. A compositionally biased stretch (basic and acidic residues) spans G185 to F194.

The protein resides in the nucleus. In terms of biological role, probable transcriptional regulator. This chain is Forkhead box protein L3, found in Homo sapiens (Human).